The sequence spans 896 residues: Probable DNA-directed RNA polymerase (896 aa).

Active-site residues include Asp-546, Lys-617, and Asp-798.

Belongs to the phage and mitochondrial RNA polymerase family.

Its subcellular location is the mitochondrion. The catalysed reaction is RNA(n) + a ribonucleoside 5'-triphosphate = RNA(n+1) + diphosphate. Its function is as follows. DNA-dependent RNA polymerase catalyzes the transcription of DNA into RNA using the four ribonucleoside triphosphates as substrates. The sequence is that of Probable DNA-directed RNA polymerase from Neurospora crassa.